Consider the following 395-residue polypeptide: Phosphoprotein (395 aa).

Positions 178-217 (NGVLHGSEIRSKSSSGVIPGVPQSRPQLASSPAHADPAPA) are disordered. Positions 206 to 217 (ASSPAHADPAPA) are enriched in low complexity. Residues 220-283 (ENVKEIIELL…ITTIKIMDPS (64 aa)) form a multimerization region.

It belongs to the rubulavirus/avulavirus P protein family. As to quaternary structure, homotetramer. Interacts (via multimerization domain) with polymerase L; this interaction forms the polymerase L-P complex. Interacts (via N-terminus) with N0 (via Ncore); this interaction allows P to chaperon N0 to avoid N polymerization before encapsidation. Interacts (via C-terminus) with N-RNA template; this interaction positions the polymerase on the template for both transcription and replication. Interacts with host ARHGAP26; this interaction promotes host RHOA activation. Interacts with host KPNA1 and KPNA6.

The protein resides in the host cytoplasm. Its function is as follows. Essential cofactor of the RNA polymerase L that plays a central role in the transcription and replication by forming the polymerase complex with RNA polymerase L and recruiting L to the genomic N-RNA template for RNA synthesis. Also plays a central role in the encapsidation of nascent RNA chains by forming the encapsidation complex with the nucleocapsid protein N (N-P complex). Acts as a chaperone for newly synthesized free N protein, so-called N0, allowing encapsidation of nascent RNA chains during replication. The nucleoprotein protein N prevents excessive phosphorylation of P, which leads to down-regulation of viral transcription/ replication. Participates, together with N, in the formation of viral factories (viroplasms), which are large inclusions in the host cytoplasm where replication takes place. Also plays a role in viral growth by promoting host RHOA activation and thus actin formation via ARHGAP26 inhibition. The protein is Phosphoprotein (P/V) of Homo sapiens (Human).